The chain runs to 147 residues: HTH-type transcriptional regulator HmrR (147 aa).

In terms of domain architecture, HTH merR-type spans 1 to 69; that stretch reads MNIGEASKVS…VEQIKELLAL (69 aa). The H-T-H motif DNA-binding region spans 4–23; sequence GEASKVSGVSSKMIRYYEQI.

In terms of assembly, homodimer.

The protein resides in the cytoplasm. In terms of biological role, regulates the transcription of actP. It detects cytoplasmic copper stress and activates transcription in response to increasing copper concentrations. In the absence of copper, it negatively regulates the transcription of actP. The sequence is that of HTH-type transcriptional regulator HmrR (hmrR) from Sinorhizobium medicae (strain WSM419) (Ensifer medicae).